The sequence spans 323 residues: Beta-ketoacyl-[acyl-carrier-protein] synthase III (323 aa).

Residues C112 and H250 contribute to the active site. An ACP-binding region spans residues 251-255 (QANYR). The active site involves N280.

Belongs to the thiolase-like superfamily. FabH family. Homodimer.

Its subcellular location is the cytoplasm. It carries out the reaction malonyl-[ACP] + acetyl-CoA + H(+) = 3-oxobutanoyl-[ACP] + CO2 + CoA. The protein operates within lipid metabolism; fatty acid biosynthesis. Its function is as follows. Catalyzes the condensation reaction of fatty acid synthesis by the addition to an acyl acceptor of two carbons from malonyl-ACP. Catalyzes the first condensation reaction which initiates fatty acid synthesis and may therefore play a role in governing the total rate of fatty acid production. Possesses both acetoacetyl-ACP synthase and acetyl transacylase activities. Its substrate specificity determines the biosynthesis of branched-chain and/or straight-chain of fatty acids. In Clostridium beijerinckii (strain ATCC 51743 / NCIMB 8052) (Clostridium acetobutylicum), this protein is Beta-ketoacyl-[acyl-carrier-protein] synthase III.